A 425-amino-acid chain; its full sequence is Tyrosine--tRNA ligase (425 aa).

Tyr-37 serves as a coordination point for L-tyrosine. The 'HIGH' region signature appears at 42 to 51 (PTADSLHLGH). Positions 175 and 179 each coordinate L-tyrosine. The short motif at 235–239 (KFGKT) is the 'KMSKS' region element. Lys-238 is a binding site for ATP. An S4 RNA-binding domain is found at 357 to 414 (ADLQQALVSAELVPSRGQARTMISSNAVTINGEKQADPEYTFSASDRLFDRYTLLRRG).

Belongs to the class-I aminoacyl-tRNA synthetase family. TyrS type 1 subfamily. Homodimer.

The protein localises to the cytoplasm. The enzyme catalyses tRNA(Tyr) + L-tyrosine + ATP = L-tyrosyl-tRNA(Tyr) + AMP + diphosphate + H(+). Catalyzes the attachment of tyrosine to tRNA(Tyr) in a two-step reaction: tyrosine is first activated by ATP to form Tyr-AMP and then transferred to the acceptor end of tRNA(Tyr). This Pectobacterium carotovorum subsp. carotovorum (strain PC1) protein is Tyrosine--tRNA ligase.